The chain runs to 170 residues: Peptide deformylase (170 aa).

The Fe cation site is built by C94 and H136. E137 is an active-site residue. H140 contributes to the Fe cation binding site.

It belongs to the polypeptide deformylase family. Fe(2+) serves as cofactor.

The catalysed reaction is N-terminal N-formyl-L-methionyl-[peptide] + H2O = N-terminal L-methionyl-[peptide] + formate. Functionally, removes the formyl group from the N-terminal Met of newly synthesized proteins. Requires at least a dipeptide for an efficient rate of reaction. N-terminal L-methionine is a prerequisite for activity but the enzyme has broad specificity at other positions. This chain is Peptide deformylase, found in Agrobacterium fabrum (strain C58 / ATCC 33970) (Agrobacterium tumefaciens (strain C58)).